Consider the following 297-residue polypeptide: Probable DNA polymerase III subunit delta (297 aa).

The protein belongs to the DNA polymerase HolA subunit family. As to quaternary structure, component of the DNA clamp loading complex consisting of tau(3):delta(1):delta'(1). The DNA polymerase III holoenzyme complex contains at least 10 different subunits organized into 3 functionally essential subassemblies: the Pol III core, the beta sliding clamp processivity factor and the clamp-loading complex. The Pol III core (subunits alpha, epsilon and theta) contains the polymerase and the 3'-5' exonuclease proofreading activities. The polymerase is tethered to the template via the dimeric beta sliding clamp processivity factor. The DNA clamp-loading complex assembles the beta sliding clamp onto the primed template and plays a central role in the organization and communication at the replication fork.

It carries out the reaction DNA(n) + a 2'-deoxyribonucleoside 5'-triphosphate = DNA(n+1) + diphosphate. In terms of biological role, part of the beta sliding clamp loading complex, which hydrolyzes ATP to load the beta clamp onto primed DNA to form the DNA replication pre-initiation complex. DNA polymerase III is a complex, multichain enzyme responsible for most of the replicative synthesis in bacteria. This DNA polymerase also exhibits 3'-5' exonuclease activity. The delta subunit is the wrench that will open the beta subunit dimer. The DNA clamp loading complex (tau(3),delta,delta') is thought to load beta dimers onto DNA by binding ATP which alters the complex's conformation so it can bind beta sliding clamp dimers and open them at one interface. Primed DNA is recognized, ATP is hydrolyzed releasing the clamp loading complex and closing the beta sliding clamp ring around the primed DNA. The polypeptide is Probable DNA polymerase III subunit delta (Mycoplasma genitalium (strain ATCC 33530 / DSM 19775 / NCTC 10195 / G37) (Mycoplasmoides genitalium)).